The primary structure comprises 154 residues: Protein X (154 aa).

The tract at residues 68-117 (PCALRFTSARCMETTVNAHQILPKVLHKRTLGLPAMSTTDLEAYFKDCVF) is mitochondrial targeting sequence.

This sequence belongs to the orthohepadnavirus protein X family. In terms of assembly, may form homodimer. May interact with host CEBPA, CFLAR, CREB1, DDB1, E4F1, HBXIP, HSPD1/HSP60, NFKBIA, POLR2E and SMAD4. Interacts with host SMC5-SMC6 complex and induces its degradation. Interacts with host TRPC4AP; leading to prevent ubiquitination of TRPC4AP. Interacts with host PLSCR1; this interaction promotes ubiquitination and degradation of HBx and impairs HBx-mediated cell proliferation. A fraction may be phosphorylated in insect cells and HepG2 cells, a human hepatoblastoma cell line. Phosphorylated in vitro by host protein kinase C or mitogen-activated protein kinase. N-acetylated in insect cells.

It is found in the host cytoplasm. The protein resides in the host nucleus. It localises to the host mitochondrion. Its function is as follows. Multifunctional protein that plays a role in silencing host antiviral defenses and promoting viral transcription. Does not seem to be essential for HBV infection. May be directly involved in development of cirrhosis and liver cancer (hepatocellular carcinoma). Most of cytosolic activities involve modulation of cytosolic calcium. The effect on apoptosis is controversial depending on the cell types in which the studies have been conducted. May induce apoptosis by localizing in mitochondria and causing loss of mitochondrial membrane potential. May also modulate apoptosis by binding host CFLAR, a key regulator of the death-inducing signaling complex (DISC). Promotes viral transcription by using the host E3 ubiquitin ligase DDB1 to target the SMC5-SMC6 complex to proteasomal degradation. This host complex would otherwise bind to viral episomal DNA, and prevents its transcription. Moderately stimulates transcription of many different viral and cellular transcription elements. Promoters and enhancers stimulated by HBx contain DNA binding sites for NF-kappa-B, AP-1, AP-2, c-EBP, ATF/CREB, or the calcium-activated factor NF-AT. This Homo sapiens (Human) protein is Protein X.